The primary structure comprises 1370 residues: Histidine kinase P4 (1370 aa).

The N-terminal stretch at M1–K20 is a signal peptide. A helical membrane pass occupies residues W799–L819. The Histidine kinase domain maps to N852–R1072. Phosphohistidine; by autocatalysis is present on H855. In terms of domain architecture, Response regulatory spans T1119–L1234. D1167 is modified (4-aspartylphosphate). Residues K1266 to R1365 enclose the HTH araC/xylS-type domain. DNA-binding regions (H-T-H motif) lie at residues L1284–T1305 and I1332–F1355.

In terms of processing, autophosphorylated. Activation requires a sequential transfer of a phosphate group from a His in the primary transmitter domain, to an Asp in the receiver domain and to a His in the secondary transmitter domain.

It localises to the membrane. The protein resides in the cell surface. The enzyme catalyses ATP + protein L-histidine = ADP + protein N-phospho-L-histidine.. In terms of biological role, histidine kinase probably involved in ulvan degradation. Ulvan is the main polysaccharide component of the Ulvales (green seaweed) cell wall. It is composed of disaccharide building blocks comprising 3-sulfated rhamnose (Rha3S) linked to D-glucuronic acid (GlcA), L-iduronic acid (IduA), or D-xylose (Xyl). This Formosa agariphila (strain DSM 15362 / KCTC 12365 / LMG 23005 / KMM 3901 / M-2Alg 35-1) protein is Histidine kinase P4.